Reading from the N-terminus, the 186-residue chain is MTSVAQRQAQPAQPSTSQTAAPTRTQTETSSPAILRLRGAHSNGRSVQWRSDVVDNEGLGRKKSKVCCIYHRPKGVDESSDDSSSSSDSSSSSDSDSDPEPDQDKRITSGGGSSGRGHRHSHDHDHDGREGGCNHDHGRGRKHGNKGKKTERRPSPNAYEKMPKYKPKDGGAGPSNSETQGPGGSK.

Residues 1–32 (MTSVAQRQAQPAQPSTSQTAAPTRTQTETSSP) show a composition bias toward polar residues. The segment at 1–186 (MTSVAQRQAQ…SETQGPGGSK (186 aa)) is disordered. The segment covering 82 to 94 (DSSSSSDSSSSSD) has biased composition (low complexity). Positions 122–137 (HDHDHDGREGGCNHDH) are enriched in basic and acidic residues. Residues 138–151 (GRGRKHGNKGKKTE) are compositionally biased toward basic residues.

It belongs to the YPI1 family.

The protein localises to the nucleus. In terms of biological role, regulator of type 1 phosphatases which maintains protein phosphatase activity under strict control. This chain is Type 1 phosphatases regulator ypi-1 (ypi-1), found in Neurospora crassa (strain ATCC 24698 / 74-OR23-1A / CBS 708.71 / DSM 1257 / FGSC 987).